A 268-amino-acid polypeptide reads, in one-letter code: Malonyl-[acyl-carrier protein] O-methyltransferase (268 aa).

It belongs to the methyltransferase superfamily.

The catalysed reaction is malonyl-[ACP] + S-adenosyl-L-methionine = malonyl-[ACP] methyl ester + S-adenosyl-L-homocysteine. Its pathway is cofactor biosynthesis; biotin biosynthesis. Converts the free carboxyl group of a malonyl-thioester to its methyl ester by transfer of a methyl group from S-adenosyl-L-methionine (SAM). It allows to synthesize pimeloyl-ACP via the fatty acid synthetic pathway. In Prosthecochloris aestuarii (strain DSM 271 / SK 413), this protein is Malonyl-[acyl-carrier protein] O-methyltransferase.